Reading from the N-terminus, the 844-residue chain is MSKKGAGSRAKGDKAETLAALQAANEELRAKLTDIQIELQQEKSKVSKVEREKSQELKQVREHEQRKHAVLVTELKTKLHEEKMKELQAVREALLRQHEAELLRVIKIKDNENQRLQALLNTLRDGAPDKVKTVLLCEAKEEAKKGFEVEKVKMQQEISELKGAKKQVEEALTMVIQADKIKAAEIRSVYHLHQEEITRIKKECEREIRRLMEEIRFKDRAVFVLERELGVQAGHAQRLQLQKEALDEQLSQAKEAERHPGSPRRELPYASGAGDASDHSGSPEQQLDEKDARRFQLKIAELSAIIRKLEDRNALLSEERNELLKRLREAESQYKPLLDKNKRLTRKNEDLSHTLRRIESKLKFVTQENIEMRQRAGIIRRPSSLNDLDQSQDEREIDFLKLQIVEQQNLIDELSKTLETAGYVKSVLERDKLLRYRKQRKKMAKLPKPVVVETFFGYDEEASLESDGSSISYQTDRTDQTPCTPEDDLEEGMAKEETELRFRQLTMEYQALQRAYALLQEQVGGTLDAEREVKTREQLQAEIQRAQTRVEDLEKALAEQGQDMKWIEEKQALYRRNQELVEKIKQMETEEARLKHEVQDAKDQNELLEFRILELEERERKSPAINFHHTPFVDGKSPLQVYCEAEGVTDILVTELMKKLDILGDNANLTNEEQVVVIQARTVLTLAEKWLQRIEETESALQRKMVDLESEKELFSKQKGYLDEELDYRKQALDQAHKHILELEAMLYDALQQEAGAKVAELLSEEEREKLKVAVEQWKRQVMSELRERDAQILRERMELLQIAQQRIKELEERIETQKRQIKELEEKFLFLFLFFSLAFILWS.

Residues 8–259 adopt a coiled-coil conformation; it reads SRAKGDKAET…LSQAKEAERH (252 aa). The tract at residues 249–290 is disordered; sequence QLSQAKEAERHPGSPRRELPYASGAGDASDHSGSPEQQLDEK. The span at 254-267 shows a compositional bias: basic and acidic residues; sequence KEAERHPGSPRREL. Positions 270–282 are enriched in low complexity; it reads ASGAGDASDHSGS. A coiled-coil region spans residues 289-421; that stretch reads EKDARRFQLK…DELSKTLETA (133 aa). Serine 384 is subject to Phosphoserine. A compositionally biased stretch (polar residues) spans 466–483; that stretch reads SDGSSISYQTDRTDQTPC. The tract at residues 466-488 is disordered; that stretch reads SDGSSISYQTDRTDQTPCTPEDD. 2 coiled-coil regions span residues 493–621 and 688–833; these read MAKE…RERK and EKWL…LFLF.

This sequence belongs to the JAKMIP family.

Its subcellular location is the golgi apparatus. The chain is Janus kinase and microtubule-interacting protein 3 (Jakmip3) from Mus musculus (Mouse).